The primary structure comprises 394 residues: Shematrin-like protein 2 (394 aa).

The first 19 residues, M1–A19, serve as a signal peptide directing secretion.

In terms of tissue distribution, prismatic layer of shell (at protein level). Expressed primarily in the mantle with highest level in the mantle edge and lower level in the mantle pallium.

It is found in the secreted. The sequence is that of Shematrin-like protein 2 from Pinctada maxima (Silver-lipped pearl oyster).